A 297-amino-acid chain; its full sequence is MRIVLITGISGSGKSVALNALEDAGYYCVDNLPPHVLPELARYLAHEGQNRLAVAIDARSSASLDEMPGLIRALSREHDVRVLFLNASTQALIQRFSETRRRHPLSGSPSHDADVGLLVSLEEAIERERELVAPLAEFGHQIDTSNLRANVLRTWVKRFIEQKNDDLVLMFESFGFKRGVPLDADFMFDVRALPNPYYDHELRPLTGLDQPVVAFLDALPVVHQMLDDIETFLVKWLPHFREDNRSYLTVAIGCTGGQHRSVFLAETLAARLSRQASVIVRHRDAPVAVDASSRLVT.

Residue 8-15 (GISGSGKS) coordinates ATP. 57–60 (DARS) lines the GTP pocket.

Belongs to the RapZ-like family.

Its function is as follows. Displays ATPase and GTPase activities. The polypeptide is Nucleotide-binding protein BURPS668_0577 (Burkholderia pseudomallei (strain 668)).